A 234-amino-acid polypeptide reads, in one-letter code: Phosphoribosylaminoimidazole-succinocarboxamide synthase (234 aa).

The protein belongs to the SAICAR synthetase family.

It carries out the reaction 5-amino-1-(5-phospho-D-ribosyl)imidazole-4-carboxylate + L-aspartate + ATP = (2S)-2-[5-amino-1-(5-phospho-beta-D-ribosyl)imidazole-4-carboxamido]succinate + ADP + phosphate + 2 H(+). It functions in the pathway purine metabolism; IMP biosynthesis via de novo pathway; 5-amino-1-(5-phospho-D-ribosyl)imidazole-4-carboxamide from 5-amino-1-(5-phospho-D-ribosyl)imidazole-4-carboxylate: step 1/2. This is Phosphoribosylaminoimidazole-succinocarboxamide synthase from Streptococcus pyogenes serotype M3 (strain ATCC BAA-595 / MGAS315).